The sequence spans 233 residues: Chromosome partition protein MukE (233 aa).

A disordered region spans residues 207–233; sequence SLSLHDESDDADVTMGNAADSVEDEQE.

This sequence belongs to the MukE family. In terms of assembly, interacts, and probably forms a ternary complex, with MukF and MukB. The complex formation is stimulated by calcium or magnesium.

It localises to the cytoplasm. The protein localises to the nucleoid. Functionally, involved in chromosome condensation, segregation and cell cycle progression. May participate in facilitating chromosome segregation by condensation DNA from both sides of a centrally located replisome during cell division. Probably acts via its interaction with MukB and MukF. The sequence is that of Chromosome partition protein MukE from Yersinia pestis.